The primary structure comprises 907 residues: Protein translocase subunit SecA (907 aa).

Residues glutamine 86, glycine 104–threonine 108, and aspartate 511 each bind ATP. Composition is skewed to basic and acidic residues over residues alanine 838–valine 856 and glutamate 869–aspartate 888. The segment at alanine 838–aspartate 907 is disordered. Zn(2+)-binding residues include cysteine 890, cysteine 892, cysteine 901, and histidine 902. The segment covering lysine 896 to aspartate 907 has biased composition (basic residues).

The protein belongs to the SecA family. As to quaternary structure, monomer and homodimer. Part of the essential Sec protein translocation apparatus which comprises SecA, SecYEG and auxiliary proteins SecDF-YajC and YidC. The cofactor is Zn(2+).

The protein localises to the cell inner membrane. Its subcellular location is the cytoplasm. It carries out the reaction ATP + H2O + cellular proteinSide 1 = ADP + phosphate + cellular proteinSide 2.. Functionally, part of the Sec protein translocase complex. Interacts with the SecYEG preprotein conducting channel. Has a central role in coupling the hydrolysis of ATP to the transfer of proteins into and across the cell membrane, serving both as a receptor for the preprotein-SecB complex and as an ATP-driven molecular motor driving the stepwise translocation of polypeptide chains across the membrane. The chain is Protein translocase subunit SecA from Francisella philomiragia subsp. philomiragia (strain ATCC 25017 / CCUG 19701 / FSC 153 / O#319-036).